We begin with the raw amino-acid sequence, 296 residues long: Ribosomal RNA small subunit methyltransferase H (296 aa).

S-adenosyl-L-methionine contacts are provided by residues Gly-38–His-40, Glu-57, Phe-88, Asp-103, and His-110.

It belongs to the methyltransferase superfamily. RsmH family.

Its subcellular location is the cytoplasm. The enzyme catalyses cytidine(1402) in 16S rRNA + S-adenosyl-L-methionine = N(4)-methylcytidine(1402) in 16S rRNA + S-adenosyl-L-homocysteine + H(+). Its function is as follows. Specifically methylates the N4 position of cytidine in position 1402 (C1402) of 16S rRNA. In Borreliella burgdorferi (strain ZS7) (Borrelia burgdorferi), this protein is Ribosomal RNA small subunit methyltransferase H.